A 473-amino-acid chain; its full sequence is Cysteine--tRNA ligase (473 aa).

Residue cysteine 28 coordinates Zn(2+). A 'HIGH' region motif is present at residues 30 to 40 (VTVYDLCHLGH). Zn(2+) contacts are provided by cysteine 213, histidine 238, and glutamate 242. The short motif at 270–274 (KMSKS) is the 'KMSKS' region element. Lysine 273 is a binding site for ATP.

The protein belongs to the class-I aminoacyl-tRNA synthetase family. In terms of assembly, monomer. The cofactor is Zn(2+).

The protein localises to the cytoplasm. It catalyses the reaction tRNA(Cys) + L-cysteine + ATP = L-cysteinyl-tRNA(Cys) + AMP + diphosphate. This chain is Cysteine--tRNA ligase, found in Blochmanniella pennsylvanica (strain BPEN).